A 200-amino-acid chain; its full sequence is ATP-dependent Clp protease proteolytic subunit 3 (200 aa).

The active-site Nucleophile is the Ser-101. His-126 is an active-site residue.

Belongs to the peptidase S14 family. Fourteen ClpP subunits assemble into 2 heptameric rings which stack back to back to give a disk-like structure with a central cavity, resembling the structure of eukaryotic proteasomes.

Its subcellular location is the cytoplasm. The enzyme catalyses Hydrolysis of proteins to small peptides in the presence of ATP and magnesium. alpha-casein is the usual test substrate. In the absence of ATP, only oligopeptides shorter than five residues are hydrolyzed (such as succinyl-Leu-Tyr-|-NHMec, and Leu-Tyr-Leu-|-Tyr-Trp, in which cleavage of the -Tyr-|-Leu- and -Tyr-|-Trp bonds also occurs).. Its function is as follows. Cleaves peptides in various proteins in a process that requires ATP hydrolysis. Has a chymotrypsin-like activity. Plays a major role in the degradation of misfolded proteins. The sequence is that of ATP-dependent Clp protease proteolytic subunit 3 from Synechococcus sp. (strain CC9605).